A 149-amino-acid chain; its full sequence is Transcriptional repressor NrdR (149 aa).

Residues 3-34 fold into a zinc finger; that stretch reads CPFCSAVDTKVIDSRLVGEGSQVRRRRQCLVC. Positions 49-139 constitute an ATP-cone domain; that stretch reads PRVIKSNEVR…VYRSFEDIRE (91 aa).

Belongs to the NrdR family. Zn(2+) is required as a cofactor.

Functionally, negatively regulates transcription of bacterial ribonucleotide reductase nrd genes and operons by binding to NrdR-boxes. The chain is Transcriptional repressor NrdR from Pectobacterium atrosepticum (strain SCRI 1043 / ATCC BAA-672) (Erwinia carotovora subsp. atroseptica).